Here is a 1157-residue protein sequence, read N- to C-terminus: DNA-directed RNA polymerase subunit beta (1157 aa).

The protein belongs to the RNA polymerase beta chain family. As to quaternary structure, the RNAP catalytic core consists of 2 alpha, 1 beta, 1 beta' and 1 omega subunit. When a sigma factor is associated with the core the holoenzyme is formed, which can initiate transcription.

The enzyme catalyses RNA(n) + a ribonucleoside 5'-triphosphate = RNA(n+1) + diphosphate. DNA-dependent RNA polymerase catalyzes the transcription of DNA into RNA using the four ribonucleoside triphosphates as substrates. The protein is DNA-directed RNA polymerase subunit beta of Tropheryma whipplei (strain Twist) (Whipple's bacillus).